The following is a 248-amino-acid chain: Pulmonary surfactant-associated protein A (248 aa).

An N-terminal signal peptide occupies residues 1 to 17 (MLLCSLTLMLLWMVASG). Residues 28–100 (GSPGIPGTPG…PGERGPPGFP (73 aa)) enclose the Collagen-like domain. The segment at 29–103 (SPGIPGTPGS…RGPPGFPAYL (75 aa)) is disordered. A compositionally biased stretch (basic and acidic residues) spans 42-51 (PGRDGRDGIK). The segment covering 54 to 65 (PGPPGPMGPPGG) has biased composition (pro residues). Low complexity predominate over residues 69 to 82 (LPGRDGMTGAPGLP). A compositionally biased stretch (basic and acidic residues) spans 84–93 (ERGEKGEPGE). The C-type lectin domain occupies 127–247 (LQGSMLEVGE…CLQYRLAICE (121 aa)). 2 disulfide bridges follow: C155-C246 and C224-C238. The N-linked (GlcNAc...) asparagine glycan is linked to N207. Residues E215, R217, N234, and D235 each coordinate Ca(2+).

Belongs to the SFTPA family. Oligomeric complex of 6 set of homotrimers.

The protein resides in the secreted. It localises to the extracellular space. The protein localises to the extracellular matrix. It is found in the surface film. In presence of calcium ions, it binds to surfactant phospholipids and contributes to lower the surface tension at the air-liquid interface in the alveoli of the mammalian lung and is essential for normal respiration. Enhances the expression of MYO18A/SP-R210 on alveolar macrophages. The polypeptide is Pulmonary surfactant-associated protein A (SFTPA1) (Ovis aries (Sheep)).